Here is a 336-residue protein sequence, read N- to C-terminus: Tetraacyldisaccharide 4'-kinase (336 aa).

ATP is bound at residue Thr60–Thr67.

This sequence belongs to the LpxK family.

It carries out the reaction a lipid A disaccharide + ATP = a lipid IVA + ADP + H(+). Its pathway is glycolipid biosynthesis; lipid IV(A) biosynthesis; lipid IV(A) from (3R)-3-hydroxytetradecanoyl-[acyl-carrier-protein] and UDP-N-acetyl-alpha-D-glucosamine: step 6/6. In terms of biological role, transfers the gamma-phosphate of ATP to the 4'-position of a tetraacyldisaccharide 1-phosphate intermediate (termed DS-1-P) to form tetraacyldisaccharide 1,4'-bis-phosphate (lipid IVA). This chain is Tetraacyldisaccharide 4'-kinase, found in Pseudomonas fluorescens (strain Pf0-1).